A 178-amino-acid chain; its full sequence is ATP synthase subunit delta (178 aa).

It belongs to the ATPase delta chain family. As to quaternary structure, F-type ATPases have 2 components, F(1) - the catalytic core - and F(0) - the membrane proton channel. F(1) has five subunits: alpha(3), beta(3), gamma(1), delta(1), epsilon(1). F(0) has three main subunits: a(1), b(2) and c(10-14). The alpha and beta chains form an alternating ring which encloses part of the gamma chain. F(1) is attached to F(0) by a central stalk formed by the gamma and epsilon chains, while a peripheral stalk is formed by the delta and b chains.

Its subcellular location is the cell membrane. Functionally, f(1)F(0) ATP synthase produces ATP from ADP in the presence of a proton or sodium gradient. F-type ATPases consist of two structural domains, F(1) containing the extramembraneous catalytic core and F(0) containing the membrane proton channel, linked together by a central stalk and a peripheral stalk. During catalysis, ATP synthesis in the catalytic domain of F(1) is coupled via a rotary mechanism of the central stalk subunits to proton translocation. In terms of biological role, this protein is part of the stalk that links CF(0) to CF(1). It either transmits conformational changes from CF(0) to CF(1) or is implicated in proton conduction. The polypeptide is ATP synthase subunit delta (Streptococcus equi subsp. zooepidemicus (strain MGCS10565)).